A 466-amino-acid chain; its full sequence is Coagulation factor VII (466 aa).

Residues 1 to 20 (MVSQALRLLCLLLGLQGCLA) form the signal peptide. The propeptide occupies 21–60 (AGGVAEASGGETRDMPWKPGPHRVFITQEEAHGVLHRRRR). One can recognise a Gla domain in the interval 61–105 (ANAFLEELRPGSLERECKEEQCSFEEAREIFKDLERTKLFWISYS). 4-carboxyglutamate occurs at positions 66, 67, 74, 76, 79, 80, 85, 86, 89, and 95. An intrachain disulfide couples C77 to C82. The EGF-like 1; calcium-binding domain occupies 106–142 (DGDQCASSPCQNGGSCKDQLQSYICFCLPAFEGRNCE). 10 disulfide bridges follow: C110–C121, C115–C130, C132–C141, C151–C162, C158–C172, C174–C187, C195–C322, C219–C224, C238–C254, and C370–C389. An O-linked (Glc...) serine; alternate glycan is attached at S112. O-linked (Xyl...) serine; alternate glycosylation occurs at S112. The O-linked (Fuc) serine glycan is linked to S120. D123 is modified ((3R)-3-hydroxyaspartate). The 42-residue stretch at 147–188 (DQLICVNENGGCEQYCSDHTGTKRSCRCHEGYSLLADGVSCT) folds into the EGF-like 2 domain. N205 is a glycosylation site (N-linked (GlcNAc...) asparagine). Residues 213–452 (IVGGKVCPKG…YIEWLQKLMR (240 aa)) form the Peptidase S1 domain. Catalysis depends on charge relay system residues H253 and D302. A glycan (N-linked (GlcNAc...) asparagine) is linked at N382. Substrate is bound at residue D398. C400 and C428 are joined by a disulfide. S404 acts as the Charge relay system in catalysis.

Belongs to the peptidase S1 family. As to quaternary structure, heterodimer of a light chain and a heavy chain linked by a disulfide bond. Post-translationally, the vitamin K-dependent, enzymatic carboxylation of some glutamate residues allows the modified protein to bind calcium. In terms of processing, the iron and 2-oxoglutarate dependent 3-hydroxylation of aspartate and asparagine is (R) stereospecific within EGF domains. O-glycosylated. O-fucosylated by POFUT1 on a conserved serine or threonine residue found in the consensus sequence C2-X(4,5)-[S/T]-C3 of EGF domains, where C2 and C3 are the second and third conserved cysteines. Post-translationally, can be either O-glucosylated or O-xylosylated at Ser-112 by POGLUT1.

The protein localises to the secreted. The catalysed reaction is Selective cleavage of Arg-|-Ile bond in factor X to form factor Xa.. In terms of biological role, initiates the extrinsic pathway of blood coagulation. Serine protease that circulates in the blood in a zymogen form. Factor VII is converted to factor VIIa by factor Xa, factor XIIa, factor IXa, or thrombin by minor proteolysis. In the presence of tissue factor and calcium ions, factor VIIa then converts factor X to factor Xa by limited proteolysis. Factor VIIa also converts factor IX to factor IXa in the presence of tissue factor and calcium. This chain is Coagulation factor VII (F7), found in Pan paniscus (Pygmy chimpanzee).